The primary structure comprises 579 residues: Transcription factor MTB2 (579 aa).

The segment at 373–439 (GGMQIDFTNS…PLNHVEAERQ (67 aa)) is disordered. Low complexity predominate over residues 382–392 (SRPVVSPVPTV). Basic and acidic residues-rich tracts occupy residues 393–415 (ESEH…DERR) and 425–439 (NGRE…AERQ). The segment at 428–441 (EEPLNHVEAERQRR) is basic motif; degenerate. In terms of domain architecture, bHLH spans 428–477 (EEPLNHVEAERQRREKLNQRFYALRAVVPNISKMDKASLLGDAIAHITDM). Positions 442 to 477 (EKLNQRFYALRAVVPNISKMDKASLLGDAIAHITDM) are helix-loop-helix motif.

Its subcellular location is the nucleus. In terms of biological role, transcription factor that negatively regulates jasmonate (JA) signaling. Negatively regulates JA-dependent response to wounding, JA-induced expression of defense genes, JA-dependent responses against herbivorous insects, and JA-dependent resistance against Botrytis cinerea infection. Plays a positive role in resistance against the bacterial pathogen Pseudomonas syringae pv tomato DC3000. In Solanum lycopersicum (Tomato), this protein is Transcription factor MTB2.